The chain runs to 205 residues: Holliday junction branch migration complex subunit RuvA (205 aa).

Positions 1 to 64 are domain I; it reads MIGKLKGLID…EDQIKLFGFR (64 aa). The domain II stretch occupies residues 65–143; that stretch reads SDLEREWFRL…GFASVDPAVA (79 aa). A flexible linker region spans residues 144-153; sequence HLSGAIEERS. The tract at residues 153-205 is domain III; that stretch reads SAPRPVADAISALVNLGYGQPQAAAAIAAAARSAGDAAQTAQLIKLGLKELSK.

The protein belongs to the RuvA family. As to quaternary structure, homotetramer. Forms an RuvA(8)-RuvB(12)-Holliday junction (HJ) complex. HJ DNA is sandwiched between 2 RuvA tetramers; dsDNA enters through RuvA and exits via RuvB. An RuvB hexamer assembles on each DNA strand where it exits the tetramer. Each RuvB hexamer is contacted by two RuvA subunits (via domain III) on 2 adjacent RuvB subunits; this complex drives branch migration. In the full resolvosome a probable DNA-RuvA(4)-RuvB(12)-RuvC(2) complex forms which resolves the HJ.

The protein resides in the cytoplasm. Functionally, the RuvA-RuvB-RuvC complex processes Holliday junction (HJ) DNA during genetic recombination and DNA repair, while the RuvA-RuvB complex plays an important role in the rescue of blocked DNA replication forks via replication fork reversal (RFR). RuvA specifically binds to HJ cruciform DNA, conferring on it an open structure. The RuvB hexamer acts as an ATP-dependent pump, pulling dsDNA into and through the RuvAB complex. HJ branch migration allows RuvC to scan DNA until it finds its consensus sequence, where it cleaves and resolves the cruciform DNA. This Rhodopseudomonas palustris (strain BisA53) protein is Holliday junction branch migration complex subunit RuvA.